A 322-amino-acid polypeptide reads, in one-letter code: Aldo-keto reductase family 1 member C23 (322 aa).

20 to 24 serves as a coordination point for NADP(+); it reads GFGTY. K31 provides a ligand contact to substrate. Position 50 (D50) interacts with NADP(+). Y55 (proton donor) is an active-site residue. H117 serves as a coordination point for substrate. Residues 166 to 167, Q190, 216 to 221, and 269 to 279 each bind NADP(+); these read SN, YSALGS, and KSYNEKRIKEN.

This sequence belongs to the aldo/keto reductase family. As to quaternary structure, monomer. In terms of tissue distribution, detected in follicle granulosa cells (at protein level). Detected in heart, lung, liver, kidney, stomach, uterus, testis, skeletal muscle and granulosa cells of the follicle wall.

The protein localises to the cytoplasm. Functionally, NADP-dependent oxidoreductase that has 20-alpha-hydroxysteroid dehydrogenase activity. This Equus caballus (Horse) protein is Aldo-keto reductase family 1 member C23 (AKR1C23).